Consider the following 248-residue polypeptide: MFQKVEGIVIRTTDYGETNKIVTIFSRELGKVSAMARGAKKPKSRLASVSQLMTHGHFLIQMGSGLGTLQQGEIISTMKEIREDIFLTAYASFIVELTDKATEDKKHNPYLFEMLYQTLHYMCEGVDPEVLSLIYQTKMLPVLGMRPYFDTCAICHQETDFVAFSVREGGFLCSRHAEQDQYRIPVGEAVHKLLRLFYHFDLHRLGNVSVKDSTKKQMRLVLNTYYDEYCGIYLKSRRFLEQLDKFQI.

It belongs to the RecO family.

In terms of biological role, involved in DNA repair and RecF pathway recombination. This is DNA repair protein RecO from Bacillus cereus (strain 03BB102).